Consider the following 663-residue polypeptide: Probable peptidyl-glycine alpha-amidating monooxygenase pamn-1 (663 aa).

The first 21 residues, 1–21, serve as a signal peptide directing secretion; sequence MNDRISINLIYLVLTFCCVSA. The tract at residues 1-300 is peptidylglycine alpha-hydroxylating monooxygenase; the sequence is MNDRISINLI…YDAKLDNPYP (300 aa). 2 residues coordinate Cu(2+): H75 and H76. Cysteines 82 and 98 form a disulfide. Cu(2+) is bound at residue H142. N-linked (GlcNAc...) asparagine glycosylation occurs at N191. Cystine bridges form between C194–C305 and C261–C283. The Cu(2+) site is built by H210 and H212. N-linked (GlcNAc...) asparagine glycosylation is present at N269. M282 contacts Cu(2+). Residues 301-663 form a peptidyl-alpha-hydroxyglycine alpha-amidating lyase region; sequence QGAICAKDYP…WQFKIRHDQN (363 aa). R376 lines the a protein pocket. N411 carries an N-linked (GlcNAc...) asparagine glycan. NHL repeat units follow at residues 411 to 454, 464 to 507, 511 to 554, and 626 to 656; these read NQTK…WKIE, SGEL…LDLN, IRQF…MTTQ, and FGQPHCLRVCPDGGHIFVGDIAEGKARLWQF. C478 and C497 are joined by a disulfide. Y496 and R543 together coordinate a protein.

This sequence in the C-terminal section; belongs to the peptidyl-alpha-hydroxyglycine alpha-amidating lyase family. The protein in the N-terminal section; belongs to the copper type II ascorbate-dependent monooxygenase family. In terms of assembly, monomer. The cofactor is Zn(2+). Cu(2+) serves as cofactor.

Its subcellular location is the secreted. The enzyme catalyses a [peptide]-C-terminal glycine + 2 L-ascorbate + O2 = a [peptide]-C-terminal (2S)-2-hydroxyglycine + 2 monodehydro-L-ascorbate radical + H2O. The catalysed reaction is a [peptide]-C-terminal (2S)-2-hydroxyglycine = a [peptide]-C-terminal amide + glyoxylate. Probable bifunctional enzyme that catalyzes 2 sequential steps in C-terminal alpha-amidation of peptides. The monooxygenase part produces an unstable peptidyl(2-hydroxyglycine) intermediate that is dismutated to glyoxylate and the corresponding desglycine peptide amide by the lyase part. C-terminal amidation of peptides such as neuropeptides is essential for full biological activity. The polypeptide is Probable peptidyl-glycine alpha-amidating monooxygenase pamn-1 (Caenorhabditis elegans).